The following is a 446-amino-acid chain: Chromosomal replication initiator protein DnaA (446 aa).

The tract at residues 1–92 is domain I, interacts with DnaA modulators; the sequence is MENISDLWNS…SQAEEEIDLP (92 aa). The segment at 87–107 is disordered; it reads EEIDLPPSKPNSAQDDSNHLP. The tract at residues 93–109 is domain II; that stretch reads PSKPNSAQDDSNHLPQS. A compositionally biased stretch (polar residues) spans 96-107; that stretch reads PNSAQDDSNHLP. Positions 110–326 are domain III, AAA+ region; that stretch reads MLNPKYTFDT…GALIRVVAYS (217 aa). 4 residues coordinate ATP: Gly-154, Gly-156, Lys-157, and Thr-158. The interval 327–446 is domain IV, binds dsDNA; it reads SLINKDINAD…QVEEINDILK (120 aa).

The protein belongs to the DnaA family. In terms of assembly, oligomerizes as a right-handed, spiral filament on DNA at oriC.

Its subcellular location is the cytoplasm. In terms of biological role, plays an essential role in the initiation and regulation of chromosomal replication. ATP-DnaA binds to the origin of replication (oriC) to initiate formation of the DNA replication initiation complex once per cell cycle. Binds the DnaA box (a 9 base pair repeat at the origin) and separates the double-stranded (ds)DNA. Forms a right-handed helical filament on oriC DNA; dsDNA binds to the exterior of the filament while single-stranded (ss)DNA is stabiized in the filament's interior. The ATP-DnaA-oriC complex binds and stabilizes one strand of the AT-rich DNA unwinding element (DUE), permitting loading of DNA polymerase. After initiation quickly degrades to an ADP-DnaA complex that is not apt for DNA replication. Binds acidic phospholipids. The chain is Chromosomal replication initiator protein DnaA from Bacillus cereus (strain ATCC 10987 / NRS 248).